The primary structure comprises 297 residues: Transmembrane protein 169 (297 aa).

The segment at 1–85 is disordered; the sequence is MEEPTAVEGQ…KEEEGDDFLD (85 aa). Residues 1-159 are Extracellular-facing; that stretch reads MEEPTAVEGQ…CQMGADRGPH (159 aa). A compositionally biased stretch (acidic residues) spans 61–85; the sequence is KTDEEPGESEGGDQPKEEEGDDFLD. A helical transmembrane segment spans residues 160-180; sequence VVLWTLICLPVVFILSFVVSF. The Cytoplasmic segment spans residues 181 to 210; that stretch reads YYGTITWYNIFLVYNEERTFWHKISYCPCL. The helical transmembrane segment at 211–231 threads the bilayer; that stretch reads VLFYPVLIMAMASSLGLYAAV. Residues 232-297 are Extracellular-facing; sequence VQLSWSWEAW…PIQEVETSTV (66 aa).

Its subcellular location is the membrane. The chain is Transmembrane protein 169 (TMEM169) from Homo sapiens (Human).